We begin with the raw amino-acid sequence, 373 residues long: P2Y purinoceptor 1 (373 aa).

Over 1-51 (MTEVPWSVVPNGTDAAFLAGLGSLWGNSTVASTAAVSSSFQCALTKTGFQF) the chain is Extracellular. 2 N-linked (GlcNAc...) asparagine glycosylation sites follow: N11 and N27. Cystine bridges form between C42–C296 and C124–C202. K46 contributes to the ADP binding site. A helical transmembrane segment spans residues 52 to 74 (YYLPAVYILVFIIGFLGNSVAIW). At 75–87 (MFVFHMKPWSGIS) the chain is on the cytoplasmic side. The helical transmembrane segment at 88–109 (VYMFNLALADFLYVLTLPALIF) threads the bilayer. The Extracellular segment spans residues 110–125 (YYFNKTDWIFGDAMCK). N113 carries N-linked (GlcNAc...) asparagine glycosylation. The chain crosses the membrane as a helical span at residues 126–147 (LQRFIFHVNLYGSILFLTCISA). The Cytoplasmic segment spans residues 148 to 166 (HRYSGVVYPLKSLGRLKKK). Residues 167-188 (NAIYVSVLVWLIVVVAISPILF) form a helical membrane-spanning segment. The Extracellular portion of the chain corresponds to 189-214 (YSGTGTRKNKTVTCYDTTSNDYLRSY). The N-linked (GlcNAc...) asparagine glycan is linked to N197. 203–205 (YDT) provides a ligand contact to ADP. A helical transmembrane segment spans residues 215–237 (FIYSMCTTVAMFCIPLVLILGCY). Residues 238-260 (GLIVKALIYNDLDNSPLRRKSIY) lie on the Cytoplasmic side of the membrane. The chain crosses the membrane as a helical span at residues 261 to 284 (LVIIVLTVFAVSYIPFHVMKTMNL). ADP is bound by residues 283–287 (NLRAR), 303–306 (YATY), and R310. The Extracellular segment spans residues 285-303 (RARLDFQTPEMCDFNDRVY). The helical transmembrane segment at 304 to 325 (ATYQVTRGLASLNSCVDPILYF) threads the bilayer. Residues 326–373 (LAGDTFRRRLSRATRKASRRSEANLQSKSEEMTLNILSEFKQNGDTSL) are Cytoplasmic-facing.

Belongs to the G-protein coupled receptor 1 family.

It localises to the cell membrane. Its function is as follows. Receptor for extracellular adenine nucleotides such as ADP. In platelets, binding to ADP leads to mobilization of intracellular calcium ions via activation of phospholipase C, a change in platelet shape, and ultimately platelet aggregation. This Mus musculus (Mouse) protein is P2Y purinoceptor 1 (P2ry1).